Reading from the N-terminus, the 232-residue chain is 2,3,4,5-tetrahydropyridine-2,6-dicarboxylate N-acetyltransferase (232 aa).

Belongs to the transferase hexapeptide repeat family. DapH subfamily.

It catalyses the reaction (S)-2,3,4,5-tetrahydrodipicolinate + acetyl-CoA + H2O = L-2-acetamido-6-oxoheptanedioate + CoA. It participates in amino-acid biosynthesis; L-lysine biosynthesis via DAP pathway; LL-2,6-diaminopimelate from (S)-tetrahydrodipicolinate (acetylase route): step 1/3. In terms of biological role, catalyzes the transfer of an acetyl group from acetyl-CoA to tetrahydrodipicolinate. The protein is 2,3,4,5-tetrahydropyridine-2,6-dicarboxylate N-acetyltransferase of Streptococcus pneumoniae (strain Taiwan19F-14).